Here is a 681-residue protein sequence, read N- to C-terminus: PTS system glucose-specific EIICBA component (681 aa).

Positions 3 to 414 (KKLFGQLQRI…LKYKTPGRED (412 aa)) constitute a PTS EIIC type-1 domain. The next 10 membrane-spanning stretches (helical) occupy residues 16–36 (LMLPVAILPAAGLLLAIGTAM), 73–93 (MIFALGVAIGLAGGDGVAAIA), 126–146 (ILGIPTLQTGVFGGIIIGALA), 170–190 (FVPIMMATTSFILAFPMALIW), 199–219 (AFSTGLLDSNTGVAVFLFGFI), 273–293 (FMQGEFPVMMFGLPAAALAIY), 303–323 (VVAGLMGSAALTSFLTGITEP), 328–348 (FLFVAPLLFFIHAVLDGLSFL), 355–375 (LHLGYTFSGGFIDYFLLGILP), and 383–403 (VIPVGLVYAVIYYFVFRFLIV). One can recognise a PTS EIIB type-1 domain in the interval 425-506 (TELPYAVLEA…QQIMNGQVVE (82 aa)). Cys447 functions as the Phosphocysteine intermediate; for EIIB activity in the catalytic mechanism. The region spanning 551 to 655 (DQVFSEKMMG…SDITPIIVTQ (105 aa)) is the PTS EIIA type-1 domain. His603 acts as the Tele-phosphohistidine intermediate; for EIIA activity in catalysis.

The protein resides in the cell membrane. It catalyses the reaction N(pros)-phospho-L-histidyl-[protein] + D-glucose(out) = D-glucose 6-phosphate(in) + L-histidyl-[protein]. Its function is as follows. The phosphoenolpyruvate-dependent sugar phosphotransferase system (sugar PTS), a major carbohydrate active transport system, catalyzes the phosphorylation of incoming sugar substrates concomitantly with their translocation across the cell membrane. This system is involved in glucose transport. This chain is PTS system glucose-specific EIICBA component (ptsG), found in Staphylococcus aureus (strain NCTC 8325 / PS 47).